Here is a 151-residue protein sequence, read N- to C-terminus: F-box protein GID2 (151 aa).

Basic and acidic residues predominate over residues 1–25 (MKRSTTDSDLAGDAHNETNKKMKST). Positions 1 to 27 (MKRSTTDSDLAGDAHNETNKKMKSTEE) are disordered. An F-box domain is found at 29 to 75 (EIGFSNLDENLVYEVLKHVDAKTLAMSSCVSKIWHKTAQDERLWELI).

In terms of assembly, part of some SCF(GID2) complex, which consist of SKP1B, CUL1 cullin, GID2/SLY1 and some RING box protein. Interacts directly with SKP1A and SKP1B. Interacts directly with DELLA proteins GAI, RGA, RGL1, RGL3 and probably RGL2. May have a higher affinity for phosphorylated DELLA proteins. As to expression, expressed in all tissues tested, including rosette leaves, green siliques, flowers, stems, cauline leaves and seedlings.

The protein resides in the nucleus. It participates in protein modification; protein ubiquitination. Essential component of the SCF-type E3 ligase complex, SCF(GID2), a complex that positively regulates the gibberellin signaling pathway. Upon gibberellin treatment, the SCF(GID2) complex mediates the ubiquitination and subsequent degradation of DELLA proteins (GAI, RGA and RGL2), some repressors of the gibberellin pathway, leading to activate the pathway. This chain is F-box protein GID2 (GID2), found in Arabidopsis thaliana (Mouse-ear cress).